Reading from the N-terminus, the 858-residue chain is Selenocysteine insertion sequence-binding protein 2 (858 aa).

Disordered regions lie at residues 127 to 261, 275 to 296, and 327 to 625; these read KPRH…GDVG, SDHTDGAVTSNATTSSPSCTQE, and LKKT…DSAT. Composition is skewed to basic and acidic residues over residues 147–166, 188–197, and 215–224; these read KPSDERRACEEQKSSSRRAD, SSLKSDGYHK, and PEFEFSRLDF. Composition is skewed to polar residues over residues 281 to 296 and 327 to 352; these read AVTSNATTSSPSCTQE and LKKTTSSADAKNVSVTSEALSSNPSY. A Nuclear localization signal motif is present at residues 380 to 387; sequence KNKKKKEK. The segment covering 418 to 429 has biased composition (basic residues); sequence RRHRGQSPKLHS. Polar residues predominate over residues 430–447; sequence KQQTQNEFKTSGKKSQVP. Basic and acidic residues predominate over residues 539–548; that stretch reads ILKERQERMQ. 2 stretches are compositionally biased toward polar residues: residues 554–563 and 571–582; these read SAVSLTVASD and GASNQTPSQDNP. The tract at residues 678–699 is RNA-binding; it reads LVLGLREVLKHLKLRKLKCIII. The interval 785 to 819 is disordered; that stretch reads MRQEQAGEPGPQSPPSPPMQDPIPSTEEGTLPSTG. Residues 795–805 show a composition bias toward pro residues; the sequence is PQSPPSPPMQD.

It localises to the cytoplasm. The protein resides in the nucleus. Functionally, mRNA-binding protein that binds to the SECIS (selenocysteine insertion sequence) element present in the 3'-UTR of mRNAs encoding selenoproteins and facilitates the incorporation of the rare amino acid selenocysteine. Insertion of selenocysteine at UGA codons is mediated by SECISBP2 and EEFSEC: SECISBP2 (1) specifically binds the SECIS sequence once the 80S ribosome encounters an in-frame UGA codon and (2) contacts the RPS27A/eS31 of the 40S ribosome before ribosome stalling. (3) GTP-bound EEFSEC then delivers selenocysteinyl-tRNA(Sec) to the 80S ribosome and adopts a preaccommodated state conformation. (4) After GTP hydrolysis, EEFSEC dissociates from the assembly, selenocysteinyl-tRNA(Sec) accommodates, and peptide bond synthesis and selenoprotein elongation occur. In Mus musculus (Mouse), this protein is Selenocysteine insertion sequence-binding protein 2.